Here is a 275-residue protein sequence, read N- to C-terminus: Transcription regulator AOL_s00215g275 (275 aa).

Disordered stretches follow at residues threonine 13–glycine 65 and isoleucine 84–leucine 108. Residues proline 14 to arginine 26 show a composition bias toward polar residues. The span at threonine 27–proline 40 shows a compositional bias: low complexity. A compositionally biased stretch (polar residues) spans threonine 47–leucine 60. Positions lysine 88–glutamine 106 are enriched in basic residues.

Functionally, regulatory protein; part of the gene cluster that mediates the biosynthesis of sesquiterpenyl epoxy-cyclohexenoids (SECs) such as anthrobotrisins and arthrosporols, metabolites that possess a novel hybrid carbon skeleton consisting of a polyketide-derived epoxycyclohexenol combined with a terpenoid-derived monocyclic sesquiterpenol substructure (PKS-PTS hybrid). The SEC pathway plays an important role for fungal soil colonization via decreasing fungal nematode-capturing ability. AOL_s00215g275 can perform multiple functions in fungal growth and development via regulating the SEC biosynthesis, TCA cycle, and septa formation. Also involved in inhibiting conidial formation, germination, and nematicidal activity but promotes trap production. Plays a role in fungal resistances and significantly regulates the fungal morphology and responses to chemical stressors such as cell-wall-perturbing agents (SDS and Congo red), osmotic agents (NaCl and sorbitol), or the oxidant H(2)O(2). In Arthrobotrys oligospora (strain ATCC 24927 / CBS 115.81 / DSM 1491) (Nematode-trapping fungus), this protein is Transcription regulator AOL_s00215g275.